We begin with the raw amino-acid sequence, 498 residues long: ATP synthase subunit beta, chloroplastic (498 aa).

172 to 179 contacts ATP; sequence GGAGVGKT.

The protein belongs to the ATPase alpha/beta chains family. F-type ATPases have 2 components, CF(1) - the catalytic core - and CF(0) - the membrane proton channel. CF(1) has five subunits: alpha(3), beta(3), gamma(1), delta(1), epsilon(1). CF(0) has four main subunits: a(1), b(1), b'(1) and c(9-12).

The protein localises to the plastid. Its subcellular location is the chloroplast thylakoid membrane. It catalyses the reaction ATP + H2O + 4 H(+)(in) = ADP + phosphate + 5 H(+)(out). In terms of biological role, produces ATP from ADP in the presence of a proton gradient across the membrane. The catalytic sites are hosted primarily by the beta subunits. This Helianthus annuus (Common sunflower) protein is ATP synthase subunit beta, chloroplastic.